The primary structure comprises 136 residues: ATP synthase epsilon chain (136 aa).

The protein belongs to the ATPase epsilon chain family. In terms of assembly, F-type ATPases have 2 components, CF(1) - the catalytic core - and CF(0) - the membrane proton channel. CF(1) has five subunits: alpha(3), beta(3), gamma(1), delta(1), epsilon(1). CF(0) has three main subunits: a, b and c.

It is found in the cellular thylakoid membrane. Functionally, produces ATP from ADP in the presence of a proton gradient across the membrane. The chain is ATP synthase epsilon chain (atpC) from Prochloron didemni.